The sequence spans 259 residues: Protein GrpE (259 aa).

Disordered stretches follow at residues 1–74 (MNSD…IKGS) and 228–259 (PGPK…KDEN). Residues 17-40 (SSQNNPSENSVSSPNSNESVNQVE) show a composition bias toward low complexity. Polar residues-rich tracts occupy residues 56-73 (VDTA…NIKG) and 240-253 (QSAS…SVDG).

Belongs to the GrpE family. Homodimer.

It localises to the cytoplasm. Functionally, participates actively in the response to hyperosmotic and heat shock by preventing the aggregation of stress-denatured proteins, in association with DnaK and GrpE. It is the nucleotide exchange factor for DnaK and may function as a thermosensor. Unfolded proteins bind initially to DnaJ; upon interaction with the DnaJ-bound protein, DnaK hydrolyzes its bound ATP, resulting in the formation of a stable complex. GrpE releases ADP from DnaK; ATP binding to DnaK triggers the release of the substrate protein, thus completing the reaction cycle. Several rounds of ATP-dependent interactions between DnaJ, DnaK and GrpE are required for fully efficient folding. The polypeptide is Protein GrpE (Prochlorococcus marinus (strain NATL2A)).